The chain runs to 157 residues: Cytochrome c-type biogenesis protein CcmE (157 aa).

The Cytoplasmic segment spans residues 1–7; sequence MTPRQRR. The chain crosses the membrane as a helical; Signal-anchor for type II membrane protein span at residues 8 to 28; it reads LGLLAAALACCGVAAALVLNA. Residues 29-157 lie on the Periplasmic side of the membrane; the sequence is FRANLVFFFS…GAMAAQELRR (129 aa). Heme is bound by residues His-123 and Tyr-127.

It belongs to the CcmE/CycJ family.

The protein resides in the cell inner membrane. In terms of biological role, heme chaperone required for the biogenesis of c-type cytochromes. Transiently binds heme delivered by CcmC and transfers the heme to apo-cytochromes in a process facilitated by CcmF and CcmH. This Cupriavidus taiwanensis (strain DSM 17343 / BCRC 17206 / CCUG 44338 / CIP 107171 / LMG 19424 / R1) (Ralstonia taiwanensis (strain LMG 19424)) protein is Cytochrome c-type biogenesis protein CcmE.